A 427-amino-acid chain; its full sequence is L-glutamine:2-deoxy-scyllo-inosose aminotransferase (427 aa).

The tract at residues M1–P20 is disordered. Residue K205 is modified to N6-(pyridoxal phosphate)lysine.

This sequence belongs to the DegT/DnrJ/EryC1 family. L-glutamine:2-deoxy-scyllo-inosose/scyllo-inosose aminotransferase subfamily. Pyridoxal 5'-phosphate serves as cofactor.

It carries out the reaction 2-deoxy-L-scyllo-inosose + L-glutamine = 2-deoxy-scyllo-inosamine + 2-oxoglutaramate. The catalysed reaction is 3-amino-2,3-dideoxy-scyllo-inosose + L-glutamine = 2-deoxystreptamine + 2-oxoglutaramate. Its pathway is metabolic intermediate biosynthesis; 2-deoxystreptamine biosynthesis; 2-deoxystreptamine from D-glucose 6-phosphate: step 2/4. The protein operates within antibiotic biosynthesis; kanamycin biosynthesis. In terms of biological role, catalyzes the PLP-dependent transamination of 2-deoxy-scyllo-inosose (2-DOI) to form 2-deoxy-scyllo-inosamine (2-DOIA) using L-glutamine as the amino donor. Also catalyzes the transamination of 3-amino-2,3-dideoxy-scyllo-inosose (keto-2-DOIA) into 2-deoxystreptamine (2-DOS). This chain is L-glutamine:2-deoxy-scyllo-inosose aminotransferase (kanB), found in Streptomyces kanamyceticus.